The chain runs to 208 residues: dITP/XTP pyrophosphatase (208 aa).

Residue 11–16 (SRNWKK) coordinates substrate. Aspartate 76 serves as the catalytic Proton acceptor. Aspartate 76 lines the Mg(2+) pocket. Residues serine 77, 158 to 161 (FGYD), lysine 184, and 189 to 190 (HR) contribute to the substrate site.

The protein belongs to the HAM1 NTPase family. Homodimer. Mg(2+) serves as cofactor.

It catalyses the reaction XTP + H2O = XMP + diphosphate + H(+). The catalysed reaction is dITP + H2O = dIMP + diphosphate + H(+). It carries out the reaction ITP + H2O = IMP + diphosphate + H(+). Its function is as follows. Pyrophosphatase that catalyzes the hydrolysis of nucleoside triphosphates to their monophosphate derivatives, with a high preference for the non-canonical purine nucleotides XTP (xanthosine triphosphate), dITP (deoxyinosine triphosphate) and ITP. Seems to function as a house-cleaning enzyme that removes non-canonical purine nucleotides from the nucleotide pool, thus preventing their incorporation into DNA/RNA and avoiding chromosomal lesions. The polypeptide is dITP/XTP pyrophosphatase (Mycobacterium leprae (strain TN)).